We begin with the raw amino-acid sequence, 492 residues long: Ketol-acid reductoisomerase (NADP(+)) (492 aa).

In terms of domain architecture, KARI N-terminal Rossmann spans leucine 14–serine 208. NADP(+) is bound by residues cysteine 45–glutamine 48, arginine 68, arginine 76, serine 78, and aspartate 108–glutamine 110. Histidine 132 is a catalytic residue. Glycine 158 lines the NADP(+) pocket. KARI C-terminal knotted domains follow at residues serine 209–lysine 344 and tyrosine 345–methionine 485. Aspartate 217, glutamate 221, glutamate 389, and glutamate 393 together coordinate Mg(2+). Serine 414 contributes to the substrate binding site.

Belongs to the ketol-acid reductoisomerase family. It depends on Mg(2+) as a cofactor.

The catalysed reaction is (2R)-2,3-dihydroxy-3-methylbutanoate + NADP(+) = (2S)-2-acetolactate + NADPH + H(+). It catalyses the reaction (2R,3R)-2,3-dihydroxy-3-methylpentanoate + NADP(+) = (S)-2-ethyl-2-hydroxy-3-oxobutanoate + NADPH + H(+). It functions in the pathway amino-acid biosynthesis; L-isoleucine biosynthesis; L-isoleucine from 2-oxobutanoate: step 2/4. Its pathway is amino-acid biosynthesis; L-valine biosynthesis; L-valine from pyruvate: step 2/4. Involved in the biosynthesis of branched-chain amino acids (BCAA). Catalyzes an alkyl-migration followed by a ketol-acid reduction of (S)-2-acetolactate (S2AL) to yield (R)-2,3-dihydroxy-isovalerate. In the isomerase reaction, S2AL is rearranged via a Mg-dependent methyl migration to produce 3-hydroxy-3-methyl-2-ketobutyrate (HMKB). In the reductase reaction, this 2-ketoacid undergoes a metal-dependent reduction by NADPH to yield (R)-2,3-dihydroxy-isovalerate. The polypeptide is Ketol-acid reductoisomerase (NADP(+)) (Haemophilus influenzae (strain PittGG)).